The primary structure comprises 707 residues: Polyribonucleotide nucleotidyltransferase (707 aa).

Mg(2+) is bound by residues Asp488 and Asp494. The KH domain maps to 554–613; it reads PRLFTMKINQDKIREVIGKGGETIRSITAETGTEINIAEDGTITIAATTQEAGDAAKKRI. In terms of domain architecture, S1 motif spans 623 to 693; the sequence is GKVYEGTVVK…DRGRVRLSIK (71 aa).

The protein belongs to the polyribonucleotide nucleotidyltransferase family. The cofactor is Mg(2+).

Its subcellular location is the cytoplasm. The catalysed reaction is RNA(n+1) + phosphate = RNA(n) + a ribonucleoside 5'-diphosphate. Involved in mRNA degradation. Catalyzes the phosphorolysis of single-stranded polyribonucleotides processively in the 3'- to 5'-direction. This chain is Polyribonucleotide nucleotidyltransferase, found in Neisseria meningitidis serogroup B (strain ATCC BAA-335 / MC58).